The primary structure comprises 536 residues: Peptide chain release factor 3 (536 aa).

The tr-type G domain occupies 13–281 (SHRRTFAIIS…ALIDWAPAPQ (269 aa)). GTP contacts are provided by residues 22–29 (SHPDAGKT), 90–94 (DTPGH), and 144–147 (NKCD).

The protein belongs to the TRAFAC class translation factor GTPase superfamily. Classic translation factor GTPase family. PrfC subfamily.

It localises to the cytoplasm. In terms of biological role, increases the formation of ribosomal termination complexes and stimulates activities of RF-1 and RF-2. It binds guanine nucleotides and has strong preference for UGA stop codons. It may interact directly with the ribosome. The stimulation of RF-1 and RF-2 is significantly reduced by GTP and GDP, but not by GMP. The chain is Peptide chain release factor 3 from Chromobacterium violaceum (strain ATCC 12472 / DSM 30191 / JCM 1249 / CCUG 213 / NBRC 12614 / NCIMB 9131 / NCTC 9757 / MK).